Reading from the N-terminus, the 272-residue chain is Lyso-glycine lipid O-acyltransferase (272 aa).

The protein belongs to the O-acyltransferase GlsA family.

It carries out the reaction a lyso-glycine lipid + a fatty acyl-[ACP] = a glycine lipid + holo-[ACP]. The catalysed reaction is N-[(3R)-3-hydroxyhexadecanoyl]-glycine + hexadecanoyl-[ACP] = N-[(3R)-3-(hexadecanoyloxy)hexadecanoyl]-glycine + holo-[ACP]. It participates in lipid metabolism. In terms of biological role, is involved in the production of glycine lipids (GL), which are phosphorus-free membrane lipids important for fitness during growth of the human gut bacterium B.thetaiotaomicron in vivo and in vitro. Catalyzes the second step of GL biosynthesis, i.e. the O-acylation of the hydroxyl group of lyso-glycine lipids, resulting in the production of the mature diacylated glycine lipids. This is Lyso-glycine lipid O-acyltransferase from Bacteroides thetaiotaomicron (strain ATCC 29148 / DSM 2079 / JCM 5827 / CCUG 10774 / NCTC 10582 / VPI-5482 / E50).